A 78-amino-acid chain; its full sequence is Transmembrane protein 258 (78 aa).

Residues 1-18 (MDVMQRYVSPVNPAVFPH) are Cytoplasmic-facing. A helical transmembrane segment spans residues 19-39 (LATVLLVIGTFFTAWFFIFVV). Residues 40-53 (SRKSSKESTLIKEL) lie on the Cytoplasmic side of the membrane. A helical membrane pass occupies residues 54–74 (LISLCASIFLGFGIVFLLLTV). The Perinuclear space segment spans residues 75 to 78 (GIYV).

The protein belongs to the OST5 family. Homodimer. Component of the oligosaccharyltransferase (OST) complex. Interacts with klar and Msp300, components of LINC complex.

It localises to the nucleus outer membrane. Its subcellular location is the cytoplasm. The protein resides in the endoplasmic reticulum membrane. Its function is as follows. Subunit of the oligosaccharyl transferase (OST) complex that catalyzes the initial transfer of a defined glycan (Glc(3)Man(9)GlcNAc(2) in eukaryotes) from the lipid carrier dolichol-pyrophosphate to an asparagine residue within an Asn-X-Ser/Thr consensus motif in nascent polypeptide chains, the first step in protein N-glycosylation. N-glycosylation occurs cotranslationally and the complex associates with the Sec61 complex at the channel-forming translocon complex that mediates protein translocation across the endoplasmic reticulum (ER). All subunits are required for a maximal enzyme activity. In addition may regulates nuclear envelope (NE) architecture and nuclear positioning through the linker of nucleoskeleton and cytoskeleton (LINC)-dependent and -independent mechanisms. The polypeptide is Transmembrane protein 258 (Drosophila melanogaster (Fruit fly)).